We begin with the raw amino-acid sequence, 66 residues long: Venom peptide CtAPI (66 aa).

5 cysteine pairs are disulfide-bonded: C7–C44, C16–C40, C20–C33, C24–C64, and C46–C58. A TIL domain is found at 7 to 64 (CEKDEEFVNCAPRCPQNCRNIRSYQPCLVLTPVCAPGCVCRSGKVKNDRGDCVSITDC).

The protein belongs to the serine protease inhibitor-like (TIL domain-containing) family. Expressed by the venom gland.

It localises to the secreted. Its function is as follows. Serine protease inhibitor. The sequence is that of Venom peptide CtAPI from Chaerilus tricostatus (Scorpion).